Here is a 1058-residue protein sequence, read N- to C-terminus: Ubiquitin-like modifier-activating enzyme 1 Y (1058 aa).

Residues 1–22 (MSSSVLSKKRKVSGPDSSLDSS) form a disordered region. ATP is bound by residues Ala477, Asp503, Arg514, Lys527, and 575–576 (DN). Residue Cys631 is the Glycyl thioester intermediate of the active site.

Belongs to the ubiquitin-activating E1 family. As to quaternary structure, monomer. As to expression, expressed in testis in A spermatogonia and spermatids but not (or at very low levels) in pachytene spermatocytes. Also expressed in Y-bearing ovaries and at very low levels in adrenal gland.

The catalysed reaction is ATP + ubiquitin + [E1 ubiquitin-activating enzyme]-L-cysteine = AMP + diphosphate + S-ubiquitinyl-[E1 ubiquitin-activating enzyme]-L-cysteine.. It functions in the pathway protein modification; protein ubiquitination. Activates ubiquitin by first adenylating its C-terminal glycine residue with ATP, and thereafter linking this residue to the side chain of a cysteine residue in E1, yielding a ubiquitin-E1 thioester and free AMP. The Y chromosome form could be involved in the survival and proliferation of differentiating spermatogonia. The polypeptide is Ubiquitin-like modifier-activating enzyme 1 Y (Uba1y) (Mus musculus (Mouse)).